A 1203-amino-acid polypeptide reads, in one-letter code: Regulator of telomere elongation helicase 1 (1203 aa).

The 290-residue stretch at Asn7–Gln296 folds into the Helicase ATP-binding domain. Ser42–Thr49 serves as a coordination point for ATP. [4Fe-4S] cluster contacts are provided by Cys145, Cys163, Cys172, and Cys207. The Nuclear localization signal motif lies at Lys151–Val167. The DEAH box motif lies at Asp250–His253. The Nuclear localization signal signature appears at Gln871–Lys877. 2 disordered regions span residues Gln998–Gly1020 and Thr1120–Gln1203. Residues Lys1123–Ser1134 are compositionally biased toward basic and acidic residues. A PIP-box motif is present at residues Gln1160–Phe1167. A compositionally biased stretch (basic and acidic residues) spans Gln1169 to Thr1181.

This sequence belongs to the helicase family. RAD3/XPD subfamily. Interacts with TERF1. Interacts (via PIP-box) with PCNA; the interaction is direct and essential for suppressing telomere fragility. Interacts with MMS19; the interaction mediates the association of RTEL1 with the cytosolic iron-sulfur protein assembly (CIA) complex.

It is found in the nucleus. The catalysed reaction is ATP + H2O = ADP + phosphate + H(+). Its function is as follows. A probable ATP-dependent DNA helicase implicated in telomere-length regulation, DNA repair and the maintenance of genomic stability. Acts as an anti-recombinase to counteract toxic recombination and limit crossover during meiosis. Regulates meiotic recombination and crossover homeostasis by physically dissociating strand invasion events and thereby promotes noncrossover repair by meiotic synthesis dependent strand annealing (SDSA) as well as disassembly of D loop recombination intermediates. Also disassembles T loops and prevents telomere fragility by counteracting telomeric G4-DNA structures, which together ensure the dynamics and stability of the telomere. In Mus spretus (Western Mediterranean mouse), this protein is Regulator of telomere elongation helicase 1 (Rtel1).